The chain runs to 977 residues: Fc receptor-like protein 5 (977 aa).

The first 15 residues, 1–15 (MLLWVILLVLAPVSG), serve as a signal peptide directing secretion. Over 16-851 (QFARTPRPII…ANRSGPFATG (836 aa)) the chain is Extracellular. 8 consecutive Ig-like C2-type domains span residues 23-101 (PIIF…LDFS), 188-271 (PFTR…SVIS), 287-374 (PVLT…LSVT), 380-463 (PVLN…KAVS), 473-556 (PVLT…EVVS), 566-651 (PILT…ISLS), 659-744 (PILT…VTLK), and 752-834 (PVLT…ETVT). 3 cysteine pairs are disulfide-bonded: cysteine 44–cysteine 85, cysteine 211–cysteine 260, and cysteine 308–cysteine 355. A glycan (N-linked (GlcNAc...) asparagine) is linked at asparagine 383. 5 disulfide bridges follow: cysteine 401/cysteine 448, cysteine 494/cysteine 541, cysteine 587/cysteine 634, cysteine 680/cysteine 727, and cysteine 773/cysteine 819. Residues 852-872 (VAGGLLSIAGLAAGALLLYCW) traverse the membrane as a helical segment. Over 873 to 977 (LSRKAGRKPA…LFLASSAPHR (105 aa)) the chain is Cytoplasmic. The disordered stretch occupies residues 879 to 898 (RKPASDPARSPSDSDSQEPT). Residues 883 to 892 (SDPARSPSDS) show a composition bias toward low complexity. Short sequence motifs (ITIM motif) lie at residues 897 to 902 (PTYHNV), 910 to 915 (PVYTNA), 922 to 927 (VVYSEV), and 952 to 957 (IIYSEV).

Interacts with CR2. Interacts with CD19. Expressed in marginal zone B-cells, immunoblasts, tonsillar germinal center centrocytes and in the intraepithelial and interfollicular regions of the tonsil. Expressed in many lymphoma cell lines and on hairy cell leukemia cells. Isoform 1, isoform 3, isoform 4 and isoform 5 are detected in lymph node, spleen, bone marrow, and small intestine with preponderance of isoform 3. Expressed in mature and memory B-cells and down-regulated in germinal center cells (at protein level).

It is found in the cell membrane. Its function is as follows. Plays an important role in B-cell response to antigen that acts both as a negative or positive coreceptor. Inhibits B-cell receptor (BCR) signaling in the absence of CR2 stimulation but engagement with CR2 and the BCR lead to a superior calcium response compared to CR2 and BCR costimulation. May be involved in B-cell development and differentiation in peripheral lymphoid organs and may be useful markers of B-cell stages. May have an immunoregulatory role in marginal zone B-cells. May play a role in fertilization. This chain is Fc receptor-like protein 5 (FCRL5), found in Homo sapiens (Human).